A 392-amino-acid chain; its full sequence is Methylthioribose-1-phosphate isomerase (392 aa).

The active-site Proton donor is D267.

It belongs to the eIF-2B alpha/beta/delta subunits family. MtnA subfamily.

Its subcellular location is the cytoplasm. It is found in the nucleus. The enzyme catalyses 5-(methylsulfanyl)-alpha-D-ribose 1-phosphate = 5-(methylsulfanyl)-D-ribulose 1-phosphate. The protein operates within amino-acid biosynthesis; L-methionine biosynthesis via salvage pathway; L-methionine from S-methyl-5-thio-alpha-D-ribose 1-phosphate: step 1/6. Catalyzes the interconversion of methylthioribose-1-phosphate (MTR-1-P) into methylthioribulose-1-phosphate (MTRu-1-P). The chain is Methylthioribose-1-phosphate isomerase from Blastomyces gilchristii (strain SLH14081) (Blastomyces dermatitidis).